Consider the following 175-residue polypeptide: Urease accessory protein UreE (175 aa).

The tract at residues 151 to 175 is disordered; sequence GGAYGGSPSHAHRHSHVHSHSHETP. Over residues 160-169 the composition is skewed to basic residues; the sequence is HAHRHSHVHS.

It belongs to the UreE family.

It localises to the cytoplasm. Functionally, involved in urease metallocenter assembly. Binds nickel. Probably functions as a nickel donor during metallocenter assembly. The chain is Urease accessory protein UreE from Synechococcus sp. (strain WH7805).